Here is a 249-residue protein sequence, read N- to C-terminus: 5'-nucleotidase SurE (249 aa).

Residues Asp8, Asp9, Ser39, and Asn91 each coordinate a divalent metal cation.

Belongs to the SurE nucleotidase family. A divalent metal cation is required as a cofactor.

The protein resides in the cytoplasm. The catalysed reaction is a ribonucleoside 5'-phosphate + H2O = a ribonucleoside + phosphate. Functionally, nucleotidase that shows phosphatase activity on nucleoside 5'-monophosphates. The protein is 5'-nucleotidase SurE of Haemophilus influenzae (strain PittGG).